A 199-amino-acid polypeptide reads, in one-letter code: Protein Thf1 (199 aa).

Residues 167–198 (QYSRVEKDISMYKSNIEKMKQALEIIALNLKT) adopt a coiled-coil conformation.

Belongs to the THF1 family.

Its function is as follows. May be involved in photosynthetic membrane biogenesis. This Prochlorococcus marinus (strain NATL1A) protein is Protein Thf1.